A 31-amino-acid chain; its full sequence is Protamine PTP4 (31 aa).

A disordered region spans residues 1 to 31 (MPRRRRASRRIRRRRRPRVSRRRRGGRRRRR).

In terms of tissue distribution, testis.

The protein resides in the nucleus. The protein localises to the chromosome. Functionally, protamines substitute for histones in the chromatin of sperm during the haploid phase of spermatogenesis. They compact sperm DNA into a highly condensed, stable and inactive complex. The sequence is that of Protamine PTP4 from Oncorhynchus mykiss (Rainbow trout).